Here is a 317-residue protein sequence, read N- to C-terminus: Melanocyte-stimulating hormone receptor (317 aa).

Topologically, residues 1-37 (MPVLGSQRRLLGSLNCTPPATFPLTLAPNRTGPQCLE) are extracellular. N-linked (GlcNAc...) asparagine glycosylation occurs at Asn29. A helical membrane pass occupies residues 38–63 (VSIPDGLFLSLGLVSLVENVLVVAAI). Over 64–72 (AKNRNLHSP) the chain is Cytoplasmic. Residues 73-93 (MYYFICCLAVSDLLVSVSNVL) form a helical membrane-spanning segment. Topologically, residues 94-118 (ETAVMLLLEAGALAARAAVVQQLDN) are extracellular. A helical membrane pass occupies residues 119-140 (VIDMLICGSMVSSLCFLGAIAV). Over 141–163 (DRYISIFYALRYHSVVTLPRAWR) the chain is Cytoplasmic. The chain crosses the membrane as a helical span at residues 164–183 (IIAAIWVASILTSLLFITYY). Topologically, residues 184–191 (NHTVVLLC) are extracellular. A helical transmembrane segment spans residues 192–211 (LVGFFIAMLALMAVLYVHML). The Cytoplasmic segment spans residues 212–240 (ARACQHARGIARLQKRQRPIHQGFGLKGA). The helical transmembrane segment at 241-266 (ATLTILLGVFFLCWGPFFLHLSLIVL) threads the bilayer. Topologically, residues 267–279 (CPQHPTCGCIFKN) are extracellular. The helical transmembrane segment at 280-300 (FNLFLALIICNAIVDPLIYAF) threads the bilayer. Residues 301–317 (RSQELRKTLQEVLQCSW) lie on the Cytoplasmic side of the membrane. Residue Cys315 is the site of S-palmitoyl cysteine attachment.

It belongs to the G-protein coupled receptor 1 family. Interacts with MGRN1, but does not undergo MGRN1-mediated ubiquitination; this interaction competes with GNAS-binding and thus inhibits agonist-induced cAMP production. Interacts with OPN3; the interaction results in a decrease in MC1R-mediated cAMP signaling and ultimately a decrease in melanin production in melanocytes.

It localises to the cell membrane. Its function is as follows. Receptor for MSH (alpha, beta and gamma) and ACTH. The activity of this receptor is mediated by G proteins which activate adenylate cyclase. Mediates melanogenesis, the production of eumelanin (black/brown) and phaeomelanin (red/yellow), via regulation of cAMP signaling in melanocytes. This Capreolus capreolus (European roe deer) protein is Melanocyte-stimulating hormone receptor (MC1R).